The primary structure comprises 529 residues: Listeriolysin O (529 aa).

The signal sequence occupies residues 1–24 (MKKIMLVFITLILISLPIAQQTEA). The tract at residues 35–54 (SISSMAPPASPPASPKTPIE) is disordered. 4 consecutive transmembrane segments (beta stranded) span residues 214-227 (ESQL…AFKA), 234-243 (VNFGAISEGK), 312-321 (STKVKAAFDA), and 329-341 (SGDV…IKNS). The Conserved undecapeptide motif lies at 483-493 (ECTGLAWEWWR). A Cholesterol binding motif is present at residues 515-516 (TL).

Belongs to the cholesterol-dependent cytolysin family. Homooligomeric pore complex of 35 to 50 subunits; when inserted in the host membrane.

The protein localises to the secreted. It localises to the host membrane. Its subcellular location is the host cell membrane. Its activity is regulated as follows. Activity of listeriolysin O is regulated on multiple levels. It should be high in the phagosome, thereby allowing escape of the bacteria from the phagosomal compartment. Then, once inside the host cytosol, the activity must be controlled to prevent lysis of the host plasma membrane and loss of the intracellular environment. A cholesterol-dependent toxin that causes cytolysis by forming pores in cholesterol containing host membranes. After binding to target membranes, the protein undergoes a major conformation change, leading to its insertion in the host membrane and formation of an oligomeric pore complex. Cholesterol is required for binding to host membranes, membrane insertion and pore formation; cholesterol binding is mediated by a Thr-Leu pair in the C-terminus. Acts as a major virulence factor required for the escape of bacteria from phagosomal vacuoles and entry into the host cytosol. Can be reversibly inactivated by oxidation. In Listeria monocytogenes serotype 4a (strain HCC23), this protein is Listeriolysin O (hly).